A 353-amino-acid chain; its full sequence is Probable WRKY transcription factor 7 (353 aa).

A disordered region spans residues 117 to 259 (VEEKKPETSS…SSRCHCSKKR (143 aa)). Over residues 158 to 176 (SHNNNNNQNQTKNGSSSSS) the composition is skewed to low complexity. 2 stretches are compositionally biased toward polar residues: residues 184–204 (APST…SFMS) and 213–229 (THMS…QLSG). Positions 275–341 (KMADIPSDEF…YEGDHNHALV (67 aa)) form a DNA-binding region, WRKY.

It belongs to the WRKY group II-d family. In terms of tissue distribution, in young, mature and senescent leaves.

The protein resides in the nucleus. Its function is as follows. Transcription factor. Interacts specifically with the W box (5'-(T)TGAC[CT]-3'), a frequently occurring elicitor-responsive cis-acting element. The chain is Probable WRKY transcription factor 7 (WRKY7) from Arabidopsis thaliana (Mouse-ear cress).